A 171-amino-acid chain; its full sequence is Allophycocyanin subunit beta-18 (171 aa).

The residue at position 72 (Asn-72) is an N4-methylasparagine. Cys-82 lines the (2R,3E)-phycocyanobilin pocket.

This sequence belongs to the phycobiliprotein family. In terms of assembly, heterodimer of an alpha and a beta chain. Post-translationally, contains one covalently linked bilin chromophore.

It is found in the plastid. The protein resides in the chloroplast thylakoid membrane. Light-harvesting photosynthetic bile pigment-protein from the phycobiliprotein complex. Allophycocyanin has a maximum absorption at approximately 650 nanometers. The sequence is that of Allophycocyanin subunit beta-18 (apcF) from Aglaothamnion neglectum (Red alga).